A 337-amino-acid chain; its full sequence is MRVLGIETSCDETGIAIYDDQQGLLANQLYSQVKLHADYGGVVPELASRDHVRKTVPLIQAALKEAGLTAKDIDAVAYTAGPGLVGALLVGATVGRSLAFAWNVPAIPVHHMEGHLLAPMLEDNPPAFPFVALLVSGGHTQLISVTGIGQYELLGESIDDAAGEAFDKTAKLLGLDYPGGPMLSKMAAQGTEGRFVFPRPMTDRPGLDFSFSGLKTFAANTIRNNGDDEQTRADIARAFEDAVVDTLMIKCRRALEQTGFKRLVMAGGVSANRTLRAKLAEMMQKRGGEVFYARPEFCTDNGAMIAYAGMVRLQTGAKAELGVTVRPRWPLAELPAA.

The Fe cation site is built by His111 and His115. Substrate contacts are provided by residues Leu134–Gly138, Asp167, Gly180, and Asn272. Asp300 contacts Fe cation.

Belongs to the KAE1 / TsaD family. Requires Fe(2+) as cofactor.

Its subcellular location is the cytoplasm. It carries out the reaction L-threonylcarbamoyladenylate + adenosine(37) in tRNA = N(6)-L-threonylcarbamoyladenosine(37) in tRNA + AMP + H(+). Its function is as follows. Required for the formation of a threonylcarbamoyl group on adenosine at position 37 (t(6)A37) in tRNAs that read codons beginning with adenine. Is involved in the transfer of the threonylcarbamoyl moiety of threonylcarbamoyl-AMP (TC-AMP) to the N6 group of A37, together with TsaE and TsaB. TsaD likely plays a direct catalytic role in this reaction. The polypeptide is tRNA N6-adenosine threonylcarbamoyltransferase (Klebsiella pneumoniae (strain 342)).